A 388-amino-acid chain; its full sequence is Arginine biosynthesis bifunctional protein ArgJ 2 (388 aa).

5 residues coordinate substrate: threonine 145, lysine 167, threonine 178, glutamate 257, and asparagine 381. Residue threonine 178 is the Nucleophile of the active site.

The protein belongs to the ArgJ family. As to quaternary structure, heterotetramer of two alpha and two beta chains.

Its subcellular location is the cytoplasm. It carries out the reaction N(2)-acetyl-L-ornithine + L-glutamate = N-acetyl-L-glutamate + L-ornithine. It catalyses the reaction L-glutamate + acetyl-CoA = N-acetyl-L-glutamate + CoA + H(+). It functions in the pathway amino-acid biosynthesis; L-arginine biosynthesis; L-ornithine and N-acetyl-L-glutamate from L-glutamate and N(2)-acetyl-L-ornithine (cyclic): step 1/1. It participates in amino-acid biosynthesis; L-arginine biosynthesis; N(2)-acetyl-L-ornithine from L-glutamate: step 1/4. Catalyzes two activities which are involved in the cyclic version of arginine biosynthesis: the synthesis of N-acetylglutamate from glutamate and acetyl-CoA as the acetyl donor, and of ornithine by transacetylation between N(2)-acetylornithine and glutamate. This chain is Arginine biosynthesis bifunctional protein ArgJ 2, found in Clostridium acetobutylicum (strain ATCC 824 / DSM 792 / JCM 1419 / IAM 19013 / LMG 5710 / NBRC 13948 / NRRL B-527 / VKM B-1787 / 2291 / W).